A 152-amino-acid polypeptide reads, in one-letter code: Lipoprotein signal peptidase (152 aa).

2 helical membrane passes run 55–75 (NKMW…VFYM) and 85–105 (LGIS…DRVF). Catalysis depends on residues Asp-111 and Asp-129. Residues 124-144 (VFNIADSALCIGVVLIIIQTL) form a helical membrane-spanning segment.

The protein belongs to the peptidase A8 family.

Its subcellular location is the cell membrane. It carries out the reaction Release of signal peptides from bacterial membrane prolipoproteins. Hydrolyzes -Xaa-Yaa-Zaa-|-(S,diacylglyceryl)Cys-, in which Xaa is hydrophobic (preferably Leu), and Yaa (Ala or Ser) and Zaa (Gly or Ala) have small, neutral side chains.. The protein operates within protein modification; lipoprotein biosynthesis (signal peptide cleavage). This protein specifically catalyzes the removal of signal peptides from prolipoproteins. This Bacillus cereus (strain AH187) protein is Lipoprotein signal peptidase.